The following is a 233-amino-acid chain: Homeobox protein not2 (233 aa).

Residues 135–194 (LKRIRTVFTPEQLERLEKEFLKQQYMVGTERVDLASTLNLTETQVKVWFQNRRIKWRKQS) constitute a DNA-binding region (homeobox). The interval 212–233 (SSDHTDDSRETEEEEDDVDVEL) is disordered. The span at 220 to 233 (RETEEEEDDVDVEL) shows a compositional bias: acidic residues.

In terms of tissue distribution, localized to the dorsal lip of the blastopore (Spemann organizer) during early gastrulation, after which expression continues in tissues derived from the organizer. Expressed in the notochord during mid-gastrulation, the chordoneural hinge, notochord and ventral spinal cord of the tailbud at stage 22, and finally the tip of the tail in the tadpole (stage 35).

The protein localises to the nucleus. Transcriptional repressor. Plays a fundamental role in notochord formation, acting within the mesodermal region. Acts downstream of gsc and upstream of chrd and foxa4-A/pintallavis. This Xenopus laevis (African clawed frog) protein is Homeobox protein not2.